A 351-amino-acid chain; its full sequence is N-acetyl-gamma-glutamyl-phosphate reductase (351 aa).

C154 is an active-site residue.

The protein belongs to the NAGSA dehydrogenase family. Type 1 subfamily.

It is found in the cytoplasm. It catalyses the reaction N-acetyl-L-glutamate 5-semialdehyde + phosphate + NADP(+) = N-acetyl-L-glutamyl 5-phosphate + NADPH + H(+). It functions in the pathway amino-acid biosynthesis; L-arginine biosynthesis; N(2)-acetyl-L-ornithine from L-glutamate: step 3/4. Its function is as follows. Catalyzes the NADPH-dependent reduction of N-acetyl-5-glutamyl phosphate to yield N-acetyl-L-glutamate 5-semialdehyde. This chain is N-acetyl-gamma-glutamyl-phosphate reductase, found in Prochlorococcus marinus subsp. pastoris (strain CCMP1986 / NIES-2087 / MED4).